The chain runs to 306 residues: [methyl-Co(III) glycine betaine-specific corrinoid protein]--tetrahydrofolate methyltransferase (306 aa).

The protein belongs to the MtrH family.

The enzyme catalyses methyl-Co(III)-[glycine betaine-specific corrinoid protein] + (6S)-5,6,7,8-tetrahydrofolate = Co(I)-[glycine betaine-specific corrinoid protein] + (6S)-5-methyl-5,6,7,8-tetrahydrofolate + H(+). In terms of biological role, methyltransferase able to catalyze the transfer of a methyl group from methylcobalamin (methylCbl) to tetrahydrofolate (THF) in vitro, to generate methyl-THF and cob(I)alamin. In vivo, the methyl group probably comes from the adjacently encoded methylated corrinoid protein DSY3155. The methyl group may then be ultimately converted to carbon dioxide, and its oxidation would also provide reducing equivalents for anaerobic respiration. Thus, may function in the pathway that allows anaerobic methylotrophic growth of D.hafniense using glycine betaine. The protein is [methyl-Co(III) glycine betaine-specific corrinoid protein]--tetrahydrofolate methyltransferase of Desulfitobacterium hafniense (strain Y51).